Consider the following 416-residue polypeptide: Gamma-glutamyl phosphate reductase (416 aa).

The protein belongs to the gamma-glutamyl phosphate reductase family.

It localises to the cytoplasm. It catalyses the reaction L-glutamate 5-semialdehyde + phosphate + NADP(+) = L-glutamyl 5-phosphate + NADPH + H(+). It functions in the pathway amino-acid biosynthesis; L-proline biosynthesis; L-glutamate 5-semialdehyde from L-glutamate: step 2/2. Its function is as follows. Catalyzes the NADPH-dependent reduction of L-glutamate 5-phosphate into L-glutamate 5-semialdehyde and phosphate. The product spontaneously undergoes cyclization to form 1-pyrroline-5-carboxylate. This chain is Gamma-glutamyl phosphate reductase, found in Salmonella agona (strain SL483).